The primary structure comprises 482 residues: Vanillin dehydrogenase (482 aa).

228–233 (GSTHVG) is a binding site for NAD(+). Active-site residues include E250 and C284.

Belongs to the aldehyde dehydrogenase family.

The catalysed reaction is vanillin + NAD(+) + H2O = vanillate + NADH + 2 H(+). In terms of biological role, catalyzes the NAD-dependent oxidation of vanillin to vanillic acid. In Pseudomonas fluorescens, this protein is Vanillin dehydrogenase (vdh).